The following is a 329-amino-acid chain: DNA-directed RNA polymerase subunit alpha (329 aa).

An alpha N-terminal domain (alpha-NTD) region spans residues methionine 1–glutamate 231. Residues phenylalanine 249–arginine 329 are alpha C-terminal domain (alpha-CTD).

This sequence belongs to the RNA polymerase alpha chain family. As to quaternary structure, homodimer. The RNAP catalytic core consists of 2 alpha, 1 beta, 1 beta' and 1 omega subunit. When a sigma factor is associated with the core the holoenzyme is formed, which can initiate transcription.

The catalysed reaction is RNA(n) + a ribonucleoside 5'-triphosphate = RNA(n+1) + diphosphate. Its function is as follows. DNA-dependent RNA polymerase catalyzes the transcription of DNA into RNA using the four ribonucleoside triphosphates as substrates. This is DNA-directed RNA polymerase subunit alpha from Albidiferax ferrireducens (strain ATCC BAA-621 / DSM 15236 / T118) (Rhodoferax ferrireducens).